Reading from the N-terminus, the 525-residue chain is Adenosine deaminase AGSA (525 aa).

The N-terminal stretch at 1 to 25 is a signal peptide; it reads MSSFSTHNFVAIATFVCWFCCLATA. A glycan (N-linked (GlcNAc...) asparagine) is linked at N81. Residues H117 and H119 each contribute to the Zn(2+) site. D120 serves as a coordination point for substrate. N-linked (GlcNAc...) asparagine glycosylation occurs at N132. An intrachain disulfide couples C142 to C163. N188 carries N-linked (GlcNAc...) asparagine glycosylation. Residues 207–214 and G329 each bind substrate; that span reads WVRFNKYF. The N-linked (GlcNAc...) asparagine glycan is linked to N334. Residue H361 participates in Zn(2+) binding. E364 acts as the Proton donor in catalysis. H389 functions as the Proton acceptor in the catalytic mechanism. D446 contributes to the Zn(2+) binding site. D447 contributes to the substrate binding site.

The protein belongs to the metallo-dependent hydrolases superfamily. Adenosine and AMP deaminases family. ADGF subfamily. It depends on Zn(2+) as a cofactor. In terms of tissue distribution, detected in egg cordons and in the developing central nervous system. Not detected in adult central nervous system (at protein level). Atrial gland.

Its subcellular location is the secreted. It carries out the reaction adenosine + H2O + H(+) = inosine + NH4(+). Functionally, adenosine deaminase that may contribute to the degradation of extracellular adenosine, a signaling molecule that controls a variety of cellular responses. May play a role in the regulation of cell proliferation. The protein is Adenosine deaminase AGSA of Aplysia californica (California sea hare).